Here is a 578-residue protein sequence, read N- to C-terminus: V-type ATP synthase alpha chain (578 aa).

Residue 228-235 (GPFGSGKT) coordinates ATP.

The protein belongs to the ATPase alpha/beta chains family.

It carries out the reaction ATP + H2O + 4 H(+)(in) = ADP + phosphate + 5 H(+)(out). Its function is as follows. Produces ATP from ADP in the presence of a proton gradient across the membrane. The V-type alpha chain is a catalytic subunit. This is V-type ATP synthase alpha chain from Thermus thermophilus (strain ATCC BAA-163 / DSM 7039 / HB27).